The sequence spans 93 residues: MKTLILLSALVLLAFQVQADPIQNTDEETKTEEQPGEEDQAVSVSFGDPEGTSLQEESLRDLVCYCRSRGCKGRERMNGTCRKGHLMYTLCCR.

Residues 1–19 (MKTLILLSALVLLAFQVQA) form the signal peptide. Residues 20–58 (DPIQNTDEETKTEEQPGEEDQAVSVSFGDPEGTSLQEES) constitute a propeptide that is removed on maturation. The tract at residues 22 to 54 (IQNTDEETKTEEQPGEEDQAVSVSFGDPEGTSL) is disordered. 3 disulfides stabilise this stretch: C64–C92, C66–C81, and C71–C91.

Belongs to the alpha-defensin family. Paneth cells of the small bowel.

It is found in the secreted. Its function is as follows. Probably contributes to the antimicrobial barrier function of the small bowel mucosa. This is Alpha-defensin 16 (Defa16) from Mus musculus (Mouse).